A 349-amino-acid chain; its full sequence is Galanin receptor type 1 (349 aa).

At 1-36 the chain is on the extracellular side; sequence MELAVGNLSEGNASWPEPPAPEPGPLFGIGVENFVT. 2 N-linked (GlcNAc...) asparagine glycosylation sites follow: Asn-7 and Asn-12. Residues 37-57 form a helical membrane-spanning segment; it reads LVVFGLIFALGVLGNSLVITV. Topologically, residues 58–70 are cytoplasmic; that stretch reads LARSKPGKPRSTT. A helical membrane pass occupies residues 71 to 91; that stretch reads NLFILNLSIADLAYLLFCIPF. At 92 to 109 the chain is on the extracellular side; sequence QATVYALPTWVLGAFICK. Cys-108 and Cys-187 are joined by a disulfide. Residues 110–131 traverse the membrane as a helical segment; sequence FIHYFFTVSMLVSIFTLAAMSV. The Cytoplasmic portion of the chain corresponds to 132–151; it reads DRYVAIVHSRRSSSLRVSRN. A helical membrane pass occupies residues 152-172; the sequence is ALLGVGCIWALSIAMASPVAY. Residues 173–200 lie on the Extracellular side of the membrane; that stretch reads HQGLFHPRASNQTFCWEQWPDPRHKKAY. A glycan (N-linked (GlcNAc...) asparagine) is linked at Asn-183. A helical transmembrane segment spans residues 201-221; the sequence is VVCTFVFGYLLPLLLICFCYA. At 222 to 248 the chain is on the cytoplasmic side; sequence KVLNHLHKKLKNMSKKSEASKKKTAQT. Residues 249 to 269 form a helical membrane-spanning segment; it reads VLVVVVVFGISWLPHHIIHLW. The Extracellular segment spans residues 270-271; that stretch reads AE. The chain crosses the membrane as a helical span at residues 272–292; sequence FGVFPLTPASFLFRITAHCLA. Residues 293–349 are Cytoplasmic-facing; sequence YSNSSVNPIIYAFLSENFRKAYKQVFKCHIRKDSHLSDTKESKSRIDTPPSTNCTHV. Cys-320 carries S-palmitoyl cysteine lipidation.

This sequence belongs to the G-protein coupled receptor 1 family. In terms of assembly, interacts with GRP39 AND HTR1A. In terms of processing, palmitoylated on at least one of the three cysteine residues present in the C-terminal part.

The protein localises to the cell membrane. Functionally, receptor for the hormone galanin. The activity of this receptor is mediated by G proteins that inhibit adenylate cyclase activity. The chain is Galanin receptor type 1 (GALR1) from Homo sapiens (Human).